We begin with the raw amino-acid sequence, 30 residues long: Photosystem I reaction center subunit XII (30 aa).

Residues 7–29 traverse the membrane as a helical segment; it reads LIAFFLAFTAGILAIKLGQALYD.

It belongs to the PsaM family.

The protein resides in the plastid. It localises to the chloroplast thylakoid membrane. In Pinus thunbergii (Japanese black pine), this protein is Photosystem I reaction center subunit XII.